A 541-amino-acid polypeptide reads, in one-letter code: Sialate O-acetylesterase (541 aa).

The signal sequence occupies residues 1–23 (MVSPGPVFGIVLLIIARVSRSAG). Residues Asn-107, Asn-138, Asn-188, Asn-293, Asn-356, Asn-427, Asn-448, and Asn-462 are each glycosylated (N-linked (GlcNAc...) asparagine).

Disulfide-linked heterodimer of a small subunit and a large subunit. Post-translationally, the two subunits are derived from a single precursor by proteolytic cleavage. The lysosomal isoform is glycosylated. Highly expressed in liver, testis, and kidney, whereas skeletal muscle, adipose tissue, and heart have lower levels. In terms of tissue distribution, highest expression in brain and ovary and lower levels in liver and thymus.

Its subcellular location is the lysosome. The protein localises to the cytoplasm. It carries out the reaction N-acetyl-9-O-acetylneuraminate + H2O = N-acetylneuraminate + acetate + H(+). It catalyses the reaction an Ac-O-9-sialoglycoconjugate + H2O = a sialoglycoconjugate + acetate + H(+). Its activity is regulated as follows. Inhibited by diisopropyl fluorophosphate and diethyl-P-nitrophenyl phosphate. In terms of biological role, catalyzes the removal of O-acetyl ester groups from position 9 of the free diacetylated sialate N-acetyl-9-O-acetylneuraminate (Neu5,9Ac2) in the cytosol and of the diacetylated sialate residues of sialylglycoconjugates in the lysosomes. Together with the sialate-O-acetyltransferase they regulate the balance of acetylated sialoglycoconjugates, key players in various processes such as cell-cell interactions, host-pathogen recognition, and tumor antigenicity. The protein is Sialate O-acetylesterase (Siae) of Mus musculus (Mouse).